Reading from the N-terminus, the 1274-residue chain is ABC multidrug transporter E (1274 aa).

N48 carries an N-linked (GlcNAc...) asparagine glycan. The region spanning 120-344 (FCFRVTGLRV…IASPLIIVSK (225 aa)) is the ABC transmembrane type-1 1 domain. 4 helical membrane-spanning segments follow: residues 183–203 (LALL…LTLV), 205–225 (SSAL…MTKI), 280–300 (IFGI…SLAF), and 321–341 (VFFS…PLII). An ABC transporter 1 domain is found at 377-629 (IIFRDVRFTY…EGGVYRDLVN (253 aa)). 412-419 (GPSGSGKS) contacts ATP. N-linked (GlcNAc...) asparagine glycosylation is found at N473 and N580. 2 helical membrane passes run 697–717 (VAVL…SWLF) and 737–757 (FWAL…STVG). The 288-residue stretch at 697-984 (VAVLISTAGA…FFSFASNFAQ (288 aa)) folds into the ABC transmembrane type-1 2 domain. N792 is a glycosylation site (N-linked (GlcNAc...) asparagine). 3 helical membrane passes run 818–838 (FPLI…SFGW), 840–860 (LSLV…FMRI), and 924–944 (LIFA…FWYG). Residues 1023–1269 (VEFHDVSFRY…KGTYWQMVSS (247 aa)) enclose the ABC transporter 2 domain. N-linked (GlcNAc...) asparagine glycosylation occurs at N1044. 1057–1064 (GPSGCGKT) is a binding site for ATP. N1117 is a glycosylation site (N-linked (GlcNAc...) asparagine).

The protein belongs to the ABC transporter superfamily. ABCB family. Multidrug resistance exporter (TC 3.A.1.201) subfamily.

The protein resides in the cell membrane. Pleiotropic ABC efflux transporter that may be involved in A.fumigatus adaptation to azoles such as vorizonazole. The sequence is that of ABC multidrug transporter E from Aspergillus fumigatus (strain ATCC MYA-4609 / CBS 101355 / FGSC A1100 / Af293) (Neosartorya fumigata).